We begin with the raw amino-acid sequence, 571 residues long: uncharacterized protein (571 aa).

The interval 1 to 25 (MAPSVATSLKAEILPSPRTSSPSSN) is disordered. In terms of domain architecture, FAD-binding FR-type spans 135-389 (FSVFPAPILD…RGLHKNAFAT (255 aa)). The tract at residues 447–479 (NPLQKSSDDDASSTVSQQTETEMDSFEVKKDGT) is disordered.

This sequence belongs to the flavoprotein pyridine nucleotide cytochrome reductase family. Requires FAD as cofactor.

This is an uncharacterized protein from Schizosaccharomyces pombe (strain 972 / ATCC 24843) (Fission yeast).